Here is a 469-residue protein sequence, read N- to C-terminus: Ufm1-specific protease 2 (469 aa).

The residue at position 1 (M1) is an N-acetylmethionine. Catalysis depends on residues C302, D426, and H428.

Belongs to the peptidase C78 family. Expressed in brain.

It localises to the endoplasmic reticulum. The protein localises to the cytoplasm. Its subcellular location is the nucleus. Thiol-dependent isopeptidase that specifically cleaves UFM1, a ubiquitin-like modifier protein, from conjugated proteins, such as CD274/PD-L1, CYB5R3, DDRGK1, MRE11, RPL26/uL24, TRIP4 and RPL26/uL24. While it is also able to mediate the processing of UFM1 precursors, a prerequisite for conjugation reactions, UFSP2 mainly acts as a protein deUFMylase that mediates deconjugation of UFM1 from target proteins. Mediates deUFMylation of RPL26/uL24, a critical step to release the UFM1 ribosome E3 ligase (UREL) complex during the recycling of 60S ribosome subunits from the endoplasmic reticulum. Catalyzes deUFMylation of TRIP4, regulating intracellular nuclear receptors transactivation and thereby regulate cell proliferation and differentiation. The sequence is that of Ufm1-specific protease 2 from Homo sapiens (Human).